The primary structure comprises 367 residues: MDADAILKKDQRRSSLKQRNLLLSMRLNQTTATNGAPPQARVQPGKGYRNPGKVLSPIRNQEMSPGKRPTLEISELKNVSPINQAHKTGKARAGGVPLSKLQNLKLADFEIGKVLGKGKFGRVYCVRHIESGFVCALKAMEKKDIIQYNIEKQFRREVEIQSSLRHPNLTQLYGYFHDEKRVYLLMEYLVNGELYKHLKGRSHFNDVVASYYVYQMADALDYMHERNILHRDIKPENIIIGFNNTIKLTDFGWSVITPKGSKRKTLCGTVDYLSPELIRSREYNEKVDVWALGVLTYELLVGSPPFEEESKELTYKRILKRNLIFPDHVDTEARHLISRLLEYDPGDRIPLKEVKKHPWIEKNKPFW.

A disordered region spans residues 30 to 49 (TTATNGAPPQARVQPGKGYR). The region spanning 109–360 (FEIGKVLGKG…LKEVKKHPWI (252 aa)) is the Protein kinase domain. Residues 115 to 123 (LGKGKFGRV) and lysine 138 each bind ATP. The active-site Proton acceptor is the aspartate 232.

This sequence belongs to the protein kinase superfamily. Ser/Thr protein kinase family. Aurora subfamily.

The protein localises to the nucleus. It is found in the cytoplasm. It localises to the cytoskeleton. The protein resides in the spindle. Its subcellular location is the chromosome. The protein localises to the centromere. It is found in the kinetochore. It catalyses the reaction L-seryl-[protein] + ATP = O-phospho-L-seryl-[protein] + ADP + H(+). The enzyme catalyses L-threonyl-[protein] + ATP = O-phospho-L-threonyl-[protein] + ADP + H(+). In terms of biological role, component of the chromosomal passenger complex (CPC), a complex that acts as a key regulator of chromosome segregation and cytokinesis. Has a role in error-correction of aberrent kinetochore-microtubule attachments to ensure that sister kinetochores become bioriented and connect to opposite poles by promoting spindle assembly checkpoint signaling. This chain is Aurora kinase (IPL1), found in Eremothecium gossypii (strain ATCC 10895 / CBS 109.51 / FGSC 9923 / NRRL Y-1056) (Yeast).